Here is a 159-residue protein sequence, read N- to C-terminus: Transcriptional repressor NrdR (159 aa).

Residues 3 to 34 (CPFCEYNGTRVLDSRPFNHNKSIRRRRECEAC) fold into a zinc finger. The ATP-cone domain maps to 49 to 139 (LLIVKKDGTR…VYRQFKDINV (91 aa)).

The protein belongs to the NrdR family. Zn(2+) serves as cofactor.

In terms of biological role, negatively regulates transcription of bacterial ribonucleotide reductase nrd genes and operons by binding to NrdR-boxes. This is Transcriptional repressor NrdR from Brevibacillus brevis (strain 47 / JCM 6285 / NBRC 100599).